The following is a 328-amino-acid chain: Delta-aminolevulinic acid dehydratase (328 aa).

Lys-200 functions as the Schiff-base intermediate with substrate in the catalytic mechanism. Residues Arg-210 and Lys-222 each contribute to the 5-aminolevulinate site. Glu-238 is a binding site for Mg(2+). Lys-253 acts as the Schiff-base intermediate with substrate in catalysis. Positions 279 and 318 each coordinate 5-aminolevulinate.

Belongs to the ALAD family. Homooctamer.

It carries out the reaction 2 5-aminolevulinate = porphobilinogen + 2 H2O + H(+). It functions in the pathway porphyrin-containing compound metabolism; protoporphyrin-IX biosynthesis; coproporphyrinogen-III from 5-aminolevulinate: step 1/4. Its activity is regulated as follows. Stimulated by magnesium, inhibited by zinc. Functionally, catalyzes an early step in the biosynthesis of tetrapyrroles. Binds two molecules of 5-aminolevulinate per subunit, each at a distinct site, and catalyzes their condensation to form porphobilinogen. This is Delta-aminolevulinic acid dehydratase (hemB) from Chlorobaculum tepidum (strain ATCC 49652 / DSM 12025 / NBRC 103806 / TLS) (Chlorobium tepidum).